Reading from the N-terminus, the 367-residue chain is Anhydro-N-acetylmuramic acid kinase (367 aa).

13 to 20 serves as a coordination point for ATP; it reads GTSMDGAD.

Belongs to the anhydro-N-acetylmuramic acid kinase family.

It catalyses the reaction 1,6-anhydro-N-acetyl-beta-muramate + ATP + H2O = N-acetyl-D-muramate 6-phosphate + ADP + H(+). It participates in amino-sugar metabolism; 1,6-anhydro-N-acetylmuramate degradation. The protein operates within cell wall biogenesis; peptidoglycan recycling. Functionally, catalyzes the specific phosphorylation of 1,6-anhydro-N-acetylmuramic acid (anhMurNAc) with the simultaneous cleavage of the 1,6-anhydro ring, generating MurNAc-6-P. Is required for the utilization of anhMurNAc either imported from the medium or derived from its own cell wall murein, and thus plays a role in cell wall recycling. The sequence is that of Anhydro-N-acetylmuramic acid kinase from Neisseria gonorrhoeae (strain ATCC 700825 / FA 1090).